The following is a 373-amino-acid chain: UDP-sugar transporter UST74c (373 aa).

The interval 27–49 (LEEKMGGSADRSSLLDGSGSKEL) is disordered. Ser50 is modified (phosphoserine). 8 helical membrane-spanning segments follow: residues 89–111 (HFPSFLFLSLGQLTASIVVLGMG), 131–153 (FPLPLIFLGNMMFGLGGTKTLSL), 174–196 (ILGLRPSNAVQVSVYAMIGGALL), 206–225 (MRGYIYVMITNALTASNGVY), 238–260 (YGLMYYNSLFMFLPALALNYVTG), 275–297 (VFVVQFLLSCVMGFILSYSTILC), 302–324 (SALTTTIVGCLKNICVTYLGMFI), and 329–351 (VFSWLNCIGINISVLASLLYTYV).

This sequence belongs to the TPT transporter family. SLC35D subfamily.

The protein localises to the golgi apparatus membrane. Functionally, involved in the import of UDP-sugars from the cytoplasm into the Golgi lumen. This is UDP-sugar transporter UST74c (frc) from Drosophila melanogaster (Fruit fly).